Consider the following 134-residue polypeptide: Complexin-1 (134 aa).

The interval 1–112 is disordered; sequence MEFVMKQALG…PGCGDAAEEE (112 aa). The segment covering 15 to 81 has biased composition (basic and acidic residues); sequence DMGKMLGGDE…IKKKEEREAE (67 aa). Residues 29-69 adopt a coiled-coil conformation; the sequence is DAAKKEEERQEALRQEEEERKAKYAKMEAEREAVRQGIRDK. Residues 48–70 form an interaction with the SNARE complex region; that stretch reads RKAKYAKMEAEREAVRQGIRDKY.

Belongs to the complexin/synaphin family. In terms of assembly, binds to the SNARE core complex containing SNAP25, VAMP2 and STX1A.

The protein localises to the cytoplasm. It is found in the cytosol. It localises to the perikaryon. Its subcellular location is the presynapse. In terms of biological role, positively regulates a late step in synaptic vesicle exocytosis. Organizes the SNAREs into a cross-linked zigzag topology that, when interposed between the vesicle and plasma membranes, is incompatible with fusion, thereby preventing SNAREs from releasing neurotransmitters until an action potential arrives at the synapse. Also involved in glucose-induced secretion of insulin by pancreatic beta-cells. This chain is Complexin-1 (CPLX1), found in Bos taurus (Bovine).